The primary structure comprises 207 residues: Urease accessory protein UreG (207 aa).

12-19 serves as a coordination point for GTP; the sequence is GPVGAGKT.

It belongs to the SIMIBI class G3E GTPase family. UreG subfamily. As to quaternary structure, homodimer. UreD, UreF and UreG form a complex that acts as a GTP-hydrolysis-dependent molecular chaperone, activating the urease apoprotein by helping to assemble the nickel containing metallocenter of UreC. The UreE protein probably delivers the nickel.

The protein localises to the cytoplasm. Its function is as follows. Facilitates the functional incorporation of the urease nickel metallocenter. This process requires GTP hydrolysis, probably effectuated by UreG. This chain is Urease accessory protein UreG, found in Cereibacter sphaeroides (strain ATCC 17029 / ATH 2.4.9) (Rhodobacter sphaeroides).